The sequence spans 139 residues: 2S seed storage albumin protein (139 aa).

Residues 1–15 form the signal peptide; it reads AALLVALLFVANAAA. IgE-binding stretches follow at residues 16-30, 29-34, 64-78, 65-73, 95-103, 99-111, 102-114, 105-117, 112-126, 125-136, and 125-139; these read FRTTITTMEIDEDID, IDNPRR, GYDEDNQRQHFRQCC, YDEDNQRQH, QVVRRQQQQ, RQQQQQGLRGEEM, QQQGLRGEEMEEM, GLRGEEMEEMVQS, EEMVQSARDLPNECG, CGISSQRCEIRR, and CGISSQRCEIRRSWF. 2 propeptides span residues 16–31 and 58–71; these read FRTTITTMEIDEDIDN and QQSRSGGYDEDNQR. 4 disulfides stabilise this stretch: Cys39/Cys88, Cys52/Cys77, Cys78/Cys125, and Cys90/Cys132. Residues 104 to 115 are immunodominant epitope. IgE-binding; binds to IgE in 75% of the 20 walnut-allergic patients tested; it reads QGLRGEEMEEMV. The tract at residues 107 to 110 is minimally required for IgE-binding by the immunodominant epitope; it reads RGEE. Positions 136 to 139 are excised as a propeptide; the sequence is RSWF.

The protein belongs to the 2S seed storage albumins family. As to quaternary structure, the mature protein consists of a small chain and a large chain linked by disulfide bonds. As to expression, expressed in seed (at protein level). Expressed in the peel of mature seed.

Functionally, seed storage protein. The polypeptide is 2S seed storage albumin protein (Juglans regia (English walnut)).